Here is a 277-residue protein sequence, read N- to C-terminus: Large ribosomal subunit protein uL2 (277 aa).

The disordered stretch occupies residues 212-277 (RWRGKRPHVR…KFIVRGRKSK (66 aa)). Basic residues predominate over residues 254-277 (TAGKKTRDKKKASTKFIVRGRKSK).

This sequence belongs to the universal ribosomal protein uL2 family. In terms of assembly, part of the 50S ribosomal subunit. Forms a bridge to the 30S subunit in the 70S ribosome.

Its function is as follows. One of the primary rRNA binding proteins. Required for association of the 30S and 50S subunits to form the 70S ribosome, for tRNA binding and peptide bond formation. It has been suggested to have peptidyltransferase activity; this is somewhat controversial. Makes several contacts with the 16S rRNA in the 70S ribosome. The sequence is that of Large ribosomal subunit protein uL2 from Leuconostoc mesenteroides subsp. mesenteroides (strain ATCC 8293 / DSM 20343 / BCRC 11652 / CCM 1803 / JCM 6124 / NCDO 523 / NBRC 100496 / NCIMB 8023 / NCTC 12954 / NRRL B-1118 / 37Y).